Consider the following 251-residue polypeptide: Octanoyltransferase (251 aa).

The BPL/LPL catalytic domain occupies 56 to 241 (AETPDEIWIV…NLDGASAAAD (186 aa)). Residues 96–103 (RGGQITYH), 168–170 (ALG), and 181–183 (GLS) each bind substrate. Cys199 acts as the Acyl-thioester intermediate in catalysis.

Belongs to the LipB family.

Its subcellular location is the cytoplasm. The enzyme catalyses octanoyl-[ACP] + L-lysyl-[protein] = N(6)-octanoyl-L-lysyl-[protein] + holo-[ACP] + H(+). The protein operates within protein modification; protein lipoylation via endogenous pathway; protein N(6)-(lipoyl)lysine from octanoyl-[acyl-carrier-protein]: step 1/2. In terms of biological role, catalyzes the transfer of endogenously produced octanoic acid from octanoyl-acyl-carrier-protein onto the lipoyl domains of lipoate-dependent enzymes. Lipoyl-ACP can also act as a substrate although octanoyl-ACP is likely to be the physiological substrate. This is Octanoyltransferase from Burkholderia vietnamiensis (strain G4 / LMG 22486) (Burkholderia cepacia (strain R1808)).